The sequence spans 232 residues: Ribonuclease P protein component 3 (232 aa).

The protein belongs to the eukaryotic/archaeal RNase P protein component 3 family. In terms of assembly, consists of a catalytic RNA component and at least 4-5 protein subunits.

It localises to the cytoplasm. It catalyses the reaction Endonucleolytic cleavage of RNA, removing 5'-extranucleotides from tRNA precursor.. Part of ribonuclease P, a protein complex that generates mature tRNA molecules by cleaving their 5'-ends. The sequence is that of Ribonuclease P protein component 3 from Methanococcus maripaludis (strain C6 / ATCC BAA-1332).